The chain runs to 280 residues: Putative ABC transporter ATP-binding protein MTH_133 (280 aa).

Positions 6–241 constitute an ABC transporter domain; sequence IEAVDIRYTY…IDTIRGANLR (236 aa). Residue 39–46 participates in ATP binding; it reads GPNGAGKS.

Belongs to the ABC transporter superfamily.

It is found in the cell membrane. Probably part of an ABC transporter complex. Responsible for energy coupling to the transport system. In Methanothermobacter thermautotrophicus (strain ATCC 29096 / DSM 1053 / JCM 10044 / NBRC 100330 / Delta H) (Methanobacterium thermoautotrophicum), this protein is Putative ABC transporter ATP-binding protein MTH_133.